A 232-amino-acid polypeptide reads, in one-letter code: Large ribosomal subunit protein uL1 (232 aa).

The protein belongs to the universal ribosomal protein uL1 family. Part of the 50S ribosomal subunit.

In terms of biological role, binds directly to 23S rRNA. The L1 stalk is quite mobile in the ribosome, and is involved in E site tRNA release. Its function is as follows. Protein L1 is also a translational repressor protein, it controls the translation of the L11 operon by binding to its mRNA. This Ruegeria pomeroyi (strain ATCC 700808 / DSM 15171 / DSS-3) (Silicibacter pomeroyi) protein is Large ribosomal subunit protein uL1.